A 277-amino-acid polypeptide reads, in one-letter code: Diaminopimelate epimerase (277 aa).

Positions 13, 46, and 66 each coordinate substrate. Residue C75 is the Proton donor of the active site. Substrate contacts are provided by residues 76–77, N160, N193, and 211–212; these read GN and ER. The Proton acceptor role is filled by C220. 221–222 is a binding site for substrate; it reads GS.

This sequence belongs to the diaminopimelate epimerase family. As to quaternary structure, homodimer.

Its subcellular location is the cytoplasm. It catalyses the reaction (2S,6S)-2,6-diaminopimelate = meso-2,6-diaminopimelate. The protein operates within amino-acid biosynthesis; L-lysine biosynthesis via DAP pathway; DL-2,6-diaminopimelate from LL-2,6-diaminopimelate: step 1/1. In terms of biological role, catalyzes the stereoinversion of LL-2,6-diaminopimelate (L,L-DAP) to meso-diaminopimelate (meso-DAP), a precursor of L-lysine and an essential component of the bacterial peptidoglycan. In Legionella pneumophila (strain Corby), this protein is Diaminopimelate epimerase.